A 334-amino-acid polypeptide reads, in one-letter code: uncharacterized protein (334 aa).

2 helical membrane passes run 19 to 39 and 55 to 75; these read AFLR…SFGI and LIVL…AALF. The interval 308 to 334 is disordered; that stretch reads KPESKSSSQKSVETEIEKEVKDKLAKN. Positions 319 to 334 are enriched in basic and acidic residues; sequence VETEIEKEVKDKLAKN.

Its subcellular location is the cell membrane. This is an uncharacterized protein from Mycoplasma genitalium (strain ATCC 33530 / DSM 19775 / NCTC 10195 / G37) (Mycoplasmoides genitalium).